Consider the following 224-residue polypeptide: 7-cyano-7-deazaguanine synthase (224 aa).

9 to 19 serves as a coordination point for ATP; it reads ISGGMDSTLCA. C190, C198, C201, and C204 together coordinate Zn(2+).

The protein belongs to the QueC family. Requires Zn(2+) as cofactor.

The catalysed reaction is 7-carboxy-7-deazaguanine + NH4(+) + ATP = 7-cyano-7-deazaguanine + ADP + phosphate + H2O + H(+). The protein operates within purine metabolism; 7-cyano-7-deazaguanine biosynthesis. Catalyzes the ATP-dependent conversion of 7-carboxy-7-deazaguanine (CDG) to 7-cyano-7-deazaguanine (preQ(0)). This Campylobacter jejuni subsp. doylei (strain ATCC BAA-1458 / RM4099 / 269.97) protein is 7-cyano-7-deazaguanine synthase.